The sequence spans 353 residues: Photosystem II D2 protein (353 aa).

Position 2 is an N-acetylthreonine (Thr2). Thr2 is subject to Phosphothreonine. Residues 41 to 61 (CAYFALGGWFTGTTFVTSWYT) form a helical membrane-spanning segment. Residue His118 coordinates chlorophyll a. Residues 125-141 (GFMLRQFELARSVQLRP) form a helical membrane-spanning segment. Pheophytin a-binding residues include Gln130 and Asn143. A helical transmembrane segment spans residues 153–166 (VFVSVFLIYPLGQS). Residue His198 coordinates chlorophyll a. The chain crosses the membrane as a helical span at residues 208–228 (AALLCAIHGATVENTLFEDGD). Residues His215 and Phe262 each coordinate a plastoquinone. His215 is a binding site for Fe cation. A Fe cation-binding site is contributed by His269. A helical membrane pass occupies residues 279–295 (GLWMSALGVVGLALNLR).

Belongs to the reaction center PufL/M/PsbA/D family. In terms of assembly, PSII is composed of 1 copy each of membrane proteins PsbA, PsbB, PsbC, PsbD, PsbE, PsbF, PsbH, PsbI, PsbJ, PsbK, PsbL, PsbM, PsbT, PsbX, PsbY, PsbZ, Psb30/Ycf12, at least 3 peripheral proteins of the oxygen-evolving complex and a large number of cofactors. It forms dimeric complexes. The D1/D2 heterodimer binds P680, chlorophylls that are the primary electron donor of PSII, and subsequent electron acceptors. It shares a non-heme iron and each subunit binds pheophytin, quinone, additional chlorophylls, carotenoids and lipids. There is also a Cl(-1) ion associated with D1 and D2, which is required for oxygen evolution. The PSII complex binds additional chlorophylls, carotenoids and specific lipids. is required as a cofactor.

It is found in the plastid. It localises to the chloroplast thylakoid membrane. The catalysed reaction is 2 a plastoquinone + 4 hnu + 2 H2O = 2 a plastoquinol + O2. Photosystem II (PSII) is a light-driven water:plastoquinone oxidoreductase that uses light energy to abstract electrons from H(2)O, generating O(2) and a proton gradient subsequently used for ATP formation. It consists of a core antenna complex that captures photons, and an electron transfer chain that converts photonic excitation into a charge separation. The D1/D2 (PsbA/PsbD) reaction center heterodimer binds P680, the primary electron donor of PSII as well as several subsequent electron acceptors. D2 is needed for assembly of a stable PSII complex. This chain is Photosystem II D2 protein, found in Spinacia oleracea (Spinach).